Consider the following 501-residue polypeptide: Glutamate--tRNA ligase (501 aa).

The 'HIGH' region signature appears at 10–20 (PSPTGSLHIGG). Positions 251–255 (KLSKR) match the 'KMSKS' region motif. Lys254 is an ATP binding site.

It belongs to the class-I aminoacyl-tRNA synthetase family. Glutamate--tRNA ligase type 1 subfamily. As to quaternary structure, monomer.

Its subcellular location is the cytoplasm. It carries out the reaction tRNA(Glu) + L-glutamate + ATP = L-glutamyl-tRNA(Glu) + AMP + diphosphate. In terms of biological role, catalyzes the attachment of glutamate to tRNA(Glu) in a two-step reaction: glutamate is first activated by ATP to form Glu-AMP and then transferred to the acceptor end of tRNA(Glu). The protein is Glutamate--tRNA ligase of Desulforudis audaxviator (strain MP104C).